The following is a 532-amino-acid chain: 2,3-bisphosphoglycerate-independent phosphoglycerate mutase (532 aa).

Mn(2+) is bound by residues Asp15 and Ser65. The active-site Phosphoserine intermediate is Ser65. Residues His126, 156-157 (RD), Arg188, Arg194, 258-261 (RPDR), and Lys331 each bind substrate. Mn(2+) contacts are provided by Asp398, His402, Asp439, His440, and His457.

It belongs to the BPG-independent phosphoglycerate mutase family. In terms of assembly, monomer. Mn(2+) serves as cofactor.

The enzyme catalyses (2R)-2-phosphoglycerate = (2R)-3-phosphoglycerate. Its pathway is carbohydrate degradation; glycolysis; pyruvate from D-glyceraldehyde 3-phosphate: step 3/5. Catalyzes the interconversion of 2-phosphoglycerate and 3-phosphoglycerate. In Nostoc punctiforme (strain ATCC 29133 / PCC 73102), this protein is 2,3-bisphosphoglycerate-independent phosphoglycerate mutase.